Here is a 242-residue protein sequence, read N- to C-terminus: Small ribosomal subunit protein uS2 (242 aa).

This sequence belongs to the universal ribosomal protein uS2 family.

The protein is Small ribosomal subunit protein uS2 of Shewanella frigidimarina (strain NCIMB 400).